We begin with the raw amino-acid sequence, 530 residues long: Autoinducer-2 kinase (530 aa).

The protein belongs to the FGGY kinase family.

It localises to the cytoplasm. The enzyme catalyses (S)-4,5-dihydroxypentane-2,3-dione + ATP = (2S)-2-hydroxy-3,4-dioxopentyl phosphate + ADP + H(+). Its function is as follows. Catalyzes the phosphorylation of autoinducer-2 (AI-2) to phospho-AI-2, which subsequently inactivates the transcriptional regulator LsrR and leads to the transcription of the lsr operon. Phosphorylates the ring-open form of (S)-4,5-dihydroxypentane-2,3-dione (DPD), which is the precursor to all AI-2 signaling molecules, at the C5 position. In Yersinia pestis bv. Antiqua (strain Angola), this protein is Autoinducer-2 kinase.